We begin with the raw amino-acid sequence, 177 residues long: Transmembrane protein 196 (177 aa).

Helical transmembrane passes span 11 to 31 (LLVL…VGAV), 47 to 67 (SSPV…IFCA), 73 to 93 (LIMI…ILNI), and 106 to 126 (LYSL…GCTI). Basic and acidic residues predominate over residues 152 to 162 (HSHEMTEKDTE). The disordered stretch occupies residues 152 to 177 (HSHEMTEKDTENITNGGGPLALNGRV).

It localises to the cytoplasm. The protein localises to the membrane. The polypeptide is Transmembrane protein 196 (tmem196) (Xenopus tropicalis (Western clawed frog)).